Consider the following 174-residue polypeptide: MRTYISGSRRLSNIFWALTITLGGLGFFLNGCSSYFNTNLLIFSDASSIAFIPQGIILMFYGTVALILGLFLCLTIIWDVGFGYNDYNADQITVYRKGFPGKNRELNLTFPSEVVKSIKVRVTEGLNPRRQLFLCLKDSREIPLTGVDQPAALNKIENEAVTLAKYLNVFLETE.

Helical transmembrane passes span 11-31 and 56-76; these read LSNI…FLNG and IILM…CLTI.

The protein belongs to the Ycf4 family.

It localises to the plastid. Its subcellular location is the chloroplast thylakoid membrane. Seems to be required for the assembly of the photosystem I complex. This is Photosystem I assembly protein Ycf4 from Emiliania huxleyi (Coccolithophore).